A 441-amino-acid polypeptide reads, in one-letter code: Ribosomal protein uS12 methylthiotransferase RimO (441 aa).

An MTTase N-terminal domain is found at 7 to 117 (PKISFVSLGC…VLEAVHRASP (111 aa)). Residues cysteine 16, cysteine 52, cysteine 81, cysteine 148, cysteine 152, and cysteine 155 each coordinate [4Fe-4S] cluster. A Radical SAM core domain is found at 134–371 (LTPRHYAYLK…MARQQKISAR (238 aa)). The 67-residue stretch at 374–440 (KRKVGTRQQI…EYDLHGTVAG (67 aa)) folds into the TRAM domain.

This sequence belongs to the methylthiotransferase family. RimO subfamily. The cofactor is [4Fe-4S] cluster.

Its subcellular location is the cytoplasm. The enzyme catalyses L-aspartate(89)-[ribosomal protein uS12]-hydrogen + (sulfur carrier)-SH + AH2 + 2 S-adenosyl-L-methionine = 3-methylsulfanyl-L-aspartate(89)-[ribosomal protein uS12]-hydrogen + (sulfur carrier)-H + 5'-deoxyadenosine + L-methionine + A + S-adenosyl-L-homocysteine + 2 H(+). Catalyzes the methylthiolation of an aspartic acid residue of ribosomal protein uS12. The polypeptide is Ribosomal protein uS12 methylthiotransferase RimO (Bradyrhizobium sp. (strain BTAi1 / ATCC BAA-1182)).